Here is a 191-residue protein sequence, read N- to C-terminus: uncharacterized protein (191 aa).

An N-terminal signal peptide occupies residues 1–17 (MESIILSIAIFIGVLLG). Residues 82 to 148 (TFSGSRTSPD…DVGAGSGSSI (67 aa)) form a disordered region. A helical membrane pass occupies residues 168 to 188 (VAVLITAAILSAPVTAIALLE).

It is found in the membrane. This is an uncharacterized protein from Saccharomyces cerevisiae (strain ATCC 204508 / S288c) (Baker's yeast).